We begin with the raw amino-acid sequence, 107 residues long: Phosphoribosyl-ATP pyrophosphatase (107 aa).

The protein belongs to the PRA-PH family.

It is found in the cytoplasm. It carries out the reaction 1-(5-phospho-beta-D-ribosyl)-ATP + H2O = 1-(5-phospho-beta-D-ribosyl)-5'-AMP + diphosphate + H(+). The protein operates within amino-acid biosynthesis; L-histidine biosynthesis; L-histidine from 5-phospho-alpha-D-ribose 1-diphosphate: step 2/9. The polypeptide is Phosphoribosyl-ATP pyrophosphatase (Methylobacterium nodulans (strain LMG 21967 / CNCM I-2342 / ORS 2060)).